Reading from the N-terminus, the 234-residue chain is HTH-type transcriptional regulator ArcR (234 aa).

40–129 (VRHYTKGQVI…MAFLCKANDD (90 aa)) contributes to the a nucleoside 3',5'-cyclic phosphate binding site. An HTH crp-type domain is found at 155–228 (KFAKDRIIKL…HKNWLVSKHL (74 aa)). Residues 188 to 207 (IQLMSDMAGISRETAGHIIH) constitute a DNA-binding region (H-T-H motif).

The protein resides in the cytoplasm. In terms of biological role, positively regulates the expression of the arcABDCR operon under anaerobic conditions, thus playing an essential role in arginine catabolism. May also control the expression of genes encoding proteins which are involved in anaerobic metabolism. Can bind cyclic AMP. This Staphylococcus aureus (strain USA300 / TCH1516) protein is HTH-type transcriptional regulator ArcR (arcR).